The chain runs to 74 residues: uncharacterized protein (74 aa).

The tract at residues serine 39–leucine 74 is disordered.

This is an uncharacterized protein from Homo sapiens (Human).